We begin with the raw amino-acid sequence, 252 residues long: Type III pantothenate kinase (252 aa).

6–13 (DIGNTNTV) contacts ATP. Residue 105–108 (GADR) participates in substrate binding. The active-site Proton acceptor is the D107. Residue D127 coordinates K(+). T130 is an ATP binding site. T182 contacts substrate.

Belongs to the type III pantothenate kinase family. In terms of assembly, homodimer. NH4(+) serves as cofactor. K(+) is required as a cofactor.

The protein localises to the cytoplasm. The catalysed reaction is (R)-pantothenate + ATP = (R)-4'-phosphopantothenate + ADP + H(+). It functions in the pathway cofactor biosynthesis; coenzyme A biosynthesis; CoA from (R)-pantothenate: step 1/5. In terms of biological role, catalyzes the phosphorylation of pantothenate (Pan), the first step in CoA biosynthesis. This is Type III pantothenate kinase from Salinispora arenicola (strain CNS-205).